A 128-amino-acid chain; its full sequence is Large ribosomal subunit protein bL12 (128 aa).

Belongs to the bacterial ribosomal protein bL12 family. As to quaternary structure, homodimer. Part of the ribosomal stalk of the 50S ribosomal subunit. Forms a multimeric L10(L12)X complex, where L10 forms an elongated spine to which 2 to 4 L12 dimers bind in a sequential fashion. Binds GTP-bound translation factors.

Functionally, forms part of the ribosomal stalk which helps the ribosome interact with GTP-bound translation factors. Is thus essential for accurate translation. The polypeptide is Large ribosomal subunit protein bL12 (Brachyspira hyodysenteriae (strain ATCC 49526 / WA1)).